The following is a 588-amino-acid chain: Peptidoglycan D,D-transpeptidase FtsI (588 aa).

A helical transmembrane segment spans residues 19–39 (FISWRFALLCGCILLALAFLL). The active-site Acyl-ester intermediate is Ser-307. Positions 578–588 (INQGEGTGGRS) are excised as a propeptide.

It belongs to the transpeptidase family. FtsI subfamily.

The protein localises to the cell inner membrane. It catalyses the reaction Preferential cleavage: (Ac)2-L-Lys-D-Ala-|-D-Ala. Also transpeptidation of peptidyl-alanyl moieties that are N-acyl substituents of D-alanine.. It functions in the pathway cell wall biogenesis; peptidoglycan biosynthesis. Catalyzes cross-linking of the peptidoglycan cell wall at the division septum. The protein is Peptidoglycan D,D-transpeptidase FtsI of Escherichia coli O157:H7.